An 851-amino-acid chain; its full sequence is UPF0182 protein CYA_1810 (851 aa).

7 consecutive transmembrane segments (helical) span residues 7–27 (GLVL…LASF), 47–67 (VLAR…VVGS), 76–96 (ASTA…AWSL), 141–161 (FNLV…ELGL), 168–188 (LALS…LFLL), 220–240 (LPAT…FWAL), and 259–279 (WASS…FGLL).

Belongs to the UPF0182 family.

It localises to the cell membrane. This chain is UPF0182 protein CYA_1810, found in Synechococcus sp. (strain JA-3-3Ab) (Cyanobacteria bacterium Yellowstone A-Prime).